The following is a 406-amino-acid chain: MIVQPKVRGFICTTAHPEGCARHVGEWINYAKQQPSLTGGPQKVLIIGASTGFGLASRIVAAFGAGAKTIGVFFERPASGKRTASPGWYNTAAFEKTALAAGLYAKSINGDAFSDEIKQQTIDLIQKDWQGGVDLVIYSIASPRRVHPRTGEIFNSVLKPIGQTYHNKTVDVMTGEVSPVSIEPATEKEIRDTEAVMGGDDWALWINALFKYNCLAEGVKTVAFTYIGPELTHAVYRNGTIGRAKLHLEKTARELDTQLESALSGQALISVNKALVTQASAAIPVVPLYISLLYKIMKEKNIHEGCIEQMWRLFKERLYSNQNIPTDSEGRIRIDDWEMREDVQAEIKRLWESINTGNVETLSDIAGYREDFYKLFGFGLNGIDYERGVEIEKAIPSITVTPENPE.

NAD(+)-binding positions include 48–53 (GASTGF), 74–75 (FE), 111–112 (DA), and 140–141 (IA). Residue tyrosine 226 participates in substrate binding. Catalysis depends on tyrosine 236, which acts as the Proton donor. NAD(+) contacts are provided by residues lysine 245 and 275–277 (LVT).

The protein belongs to the TER reductase family. Monomer.

The catalysed reaction is a 2,3-saturated acyl-[ACP] + NAD(+) = a (2E)-enoyl-[ACP] + NADH + H(+). The protein operates within lipid metabolism; fatty acid biosynthesis. In terms of biological role, involved in the final reduction of the elongation cycle of fatty acid synthesis (FAS II). Catalyzes the reduction of a carbon-carbon double bond in an enoyl moiety that is covalently linked to an acyl carrier protein (ACP). In Coxiella burnetii (strain CbuK_Q154) (Coxiella burnetii (strain Q154)), this protein is Enoyl-[acyl-carrier-protein] reductase [NADH].